A 298-amino-acid chain; its full sequence is Small ribosomal subunit protein uS2 (298 aa).

Positions glutamate 272 to tryptophan 298 are disordered.

It belongs to the universal ribosomal protein uS2 family. In terms of assembly, component of the small ribosomal subunit. Mature ribosomes consist of a small (40S) and a large (60S) subunit. The 40S subunit contains about 33 different proteins and 1 molecule of RNA (18S). The 60S subunit contains about 49 different proteins and 3 molecules of RNA (25S, 5.8S and 5S). Interacts with rps21.

It is found in the cytoplasm. Functionally, required for the assembly and/or stability of the 40S ribosomal subunit. Required for the processing of the 20S rRNA-precursor to mature 18S rRNA in a late step of the maturation of 40S ribosomal subunits. The polypeptide is Small ribosomal subunit protein uS2 (rps0) (Aspergillus niger (strain ATCC MYA-4892 / CBS 513.88 / FGSC A1513)).